A 614-amino-acid chain; its full sequence is Vitamin B12 transporter BtuB (614 aa).

The N-terminal stretch at 1–20 is a signal peptide; sequence MIKKASLLTACSVTAFSAWA. The short motif at 26 to 33 is the TonB box element; the sequence is DTLVVTAN. Residues 38-152 form the TBDR plug domain; the sequence is PRSTVLAPTT…IGGVVNIITT (115 aa). Cyanocob(III)alamin-binding positions include Leu-83, Ser-85, Asn-92, and 110–111; that span reads VS. Positions 155–614 constitute a TBDR beta-barrel domain; it reads EPGTEISAGW…EYTLSGSYTF (460 aa). A run of 3 beta stranded transmembrane segments spans residues 158-165, 169-178, and 184-195; these read TEISAGWG, YQNYDVSTQQ, and TRVTLLGDYAHT. Residues Asp-199, Gln-211, Asp-213, and Asp-215 each contribute to the Ca(2+) site. 2 beta stranded membrane passes run 217 to 227 and 232 to 248; these read FLSKTLYGALE and DAWSGFVRGYGYDNRTN. The Ca(2+) site is built by Tyr-249 and Asp-250. Residue Ala-251 coordinates cyanocob(III)alamin. Asp-261 contacts Ca(2+). Transmembrane regions (beta stranded) follow at residues 263 to 277, 279 to 296, 309 to 325, 328 to 337, 353 to 369, 371 to 381, 385 to 400, 403 to 417, 434 to 443, 449 to 458, 473 to 490, 494 to 509, 517 to 529, and 535 to 550; these read RKLYSQSWDAGLRYN, ELIKSQLITSYSHSKDYN, TLDEMKQYTVQWANNVI, HGSIGAGVDW, YDQRNTGIYLTGLQQVG, FTFEGAARNDD, FGRHGTWQTSAGWEFI, YRFIASYGTSYKAPN, KSKQWEGAFE, VNWRISGYRN, YYNEGKARIKGVEATANF, PLTHTVSYDYVDARNA, RRAKQQVKYQLDW, and DWGITYQYLGTRYDKD. Cyanocob(III)alamin is bound at residue Thr-309. Residue Arg-517 coordinates cyanocob(III)alamin. Residue Tyr-551 coordinates cyanocob(III)alamin. Transmembrane regions (beta stranded) follow at residues 558–572, 585–596, and 602–614; these read TVKMGGVSLWDLAVA, IANLFDKDYETV, and AGREYTLSGSYTF. Positions 597-614 match the TonB C-terminal box motif; the sequence is YGYQTAGREYTLSGSYTF.

The protein belongs to the TonB-dependent receptor family. BtuB (TC 1.B.14.3.1) subfamily.

It is found in the cell outer membrane. Functionally, involved in the active translocation of vitamin B12 (cyanocobalamin) across the outer membrane to the periplasmic space. It derives its energy for transport by interacting with the trans-periplasmic membrane protein TonB. In Escherichia coli O139:H28 (strain E24377A / ETEC), this protein is Vitamin B12 transporter BtuB.